The following is a 480-amino-acid chain: Aspartyl/glutamyl-tRNA(Asn/Gln) amidotransferase subunit B (480 aa).

Belongs to the GatB/GatE family. GatB subfamily. In terms of assembly, heterotrimer of A, B and C subunits.

It catalyses the reaction L-glutamyl-tRNA(Gln) + L-glutamine + ATP + H2O = L-glutaminyl-tRNA(Gln) + L-glutamate + ADP + phosphate + H(+). The catalysed reaction is L-aspartyl-tRNA(Asn) + L-glutamine + ATP + H2O = L-asparaginyl-tRNA(Asn) + L-glutamate + ADP + phosphate + 2 H(+). In terms of biological role, allows the formation of correctly charged Asn-tRNA(Asn) or Gln-tRNA(Gln) through the transamidation of misacylated Asp-tRNA(Asn) or Glu-tRNA(Gln) in organisms which lack either or both of asparaginyl-tRNA or glutaminyl-tRNA synthetases. The reaction takes place in the presence of glutamine and ATP through an activated phospho-Asp-tRNA(Asn) or phospho-Glu-tRNA(Gln). This chain is Aspartyl/glutamyl-tRNA(Asn/Gln) amidotransferase subunit B, found in Streptococcus pneumoniae (strain 70585).